The chain runs to 295 residues: Pyrroline-5-carboxylate reductase (295 aa).

This sequence belongs to the pyrroline-5-carboxylate reductase family.

The protein localises to the cytoplasm. The catalysed reaction is L-proline + NADP(+) = (S)-1-pyrroline-5-carboxylate + NADPH + 2 H(+). It carries out the reaction L-proline + NAD(+) = (S)-1-pyrroline-5-carboxylate + NADH + 2 H(+). It participates in amino-acid biosynthesis; L-proline biosynthesis; L-proline from L-glutamate 5-semialdehyde: step 1/1. Functionally, catalyzes the reduction of 1-pyrroline-5-carboxylate (PCA) to L-proline. This chain is Pyrroline-5-carboxylate reductase, found in Mycobacterium tuberculosis (strain CDC 1551 / Oshkosh).